Here is a 430-residue protein sequence, read N- to C-terminus: Tol-Pal system protein TolB (430 aa).

The first 26 residues, 1–26, serve as a signal peptide directing secretion; the sequence is MSLMTKLGLRTLVASCLIAVGGAANA.

It belongs to the TolB family. The Tol-Pal system is composed of five core proteins: the inner membrane proteins TolA, TolQ and TolR, the periplasmic protein TolB and the outer membrane protein Pal. They form a network linking the inner and outer membranes and the peptidoglycan layer.

It is found in the periplasm. Part of the Tol-Pal system, which plays a role in outer membrane invagination during cell division and is important for maintaining outer membrane integrity. This is Tol-Pal system protein TolB from Paraburkholderia xenovorans (strain LB400).